A 139-amino-acid chain; its full sequence is Translation initiation factor 2 subunit beta (139 aa).

Belongs to the eIF-2-beta/eIF-5 family. Heterotrimer composed of an alpha, a beta and a gamma chain.

Functionally, eIF-2 functions in the early steps of protein synthesis by forming a ternary complex with GTP and initiator tRNA. The protein is Translation initiation factor 2 subunit beta of Methanococcus aeolicus (strain ATCC BAA-1280 / DSM 17508 / OCM 812 / Nankai-3).